A 282-amino-acid chain; its full sequence is Nucleotide-binding protein XCV3122 (282 aa).

5 to 12 (GLSGSGKS) provides a ligand contact to ATP. GTP is bound at residue 57–60 (DVRS).

It belongs to the RapZ-like family.

In terms of biological role, displays ATPase and GTPase activities. The protein is Nucleotide-binding protein XCV3122 of Xanthomonas euvesicatoria pv. vesicatoria (strain 85-10) (Xanthomonas campestris pv. vesicatoria).